We begin with the raw amino-acid sequence, 114 residues long: Hydrogenase maturation factor HypA (114 aa).

H2 provides a ligand contact to Ni(2+). Zn(2+) is bound by residues C73, C76, C89, and C92.

This sequence belongs to the HypA/HybF family.

Its function is as follows. Involved in the maturation of [NiFe] hydrogenases. Required for nickel insertion into the metal center of the hydrogenase. In Azoarcus sp. (strain BH72), this protein is Hydrogenase maturation factor HypA.